The primary structure comprises 139 residues: Trafficking protein particle complex subunit 2-like protein (139 aa).

This sequence belongs to the TRAPP small subunits family. Sedlin subfamily. Component of the multisubunit TRAPP (transport protein particle) complex, which includes at least TRAPPC2, TRAPPC2L, TRAPPC3, TRAPPC3L, TRAPPC4, TRAPPC5, TRAPPC8, TRAPPC9, TRAPPC10, TRAPPC11 and TRAPPC12. Interacts with the heterodimer TRAPPC3-TRAPPC6A.

The protein localises to the cytoplasm. It localises to the perinuclear region. It is found in the endoplasmic reticulum. Its subcellular location is the golgi apparatus. May play a role in vesicular transport from endoplasmic reticulum to Golgi. The protein is Trafficking protein particle complex subunit 2-like protein (Trappc2l) of Mus musculus (Mouse).